A 300-amino-acid polypeptide reads, in one-letter code: Histone deacetylase HDT3 (300 aa).

Residues 98–112 (EDEMDLDSEDEDEEL) show a composition bias toward acidic residues. The segment at 98–300 (EDEMDLDSED…AHSKAKHGGK (203 aa)) is disordered. Residues 119–132 (ENGKADEKKQKSQE) show a composition bias toward basic and acidic residues. Residues 151–197 (DDDSDEDETDDSDEDETDDSDEGLSPEEGDDDSSDEDDTSDDEEEDT) are compositionally biased toward acidic residues. The span at 198 to 211 (PTPKKPEVGKKRAA) shows a compositional bias: basic and acidic residues. Residues 265–275 (SPKSAPKSGVP) show a composition bias toward low complexity. The segment at 274 to 297 (VPCKSCSKSFISETAPQAHSKAKH) adopts a C2H2-type zinc-finger fold. The span at 279–290 (CSKSFISETAPQ) shows a compositional bias: polar residues.

Belongs to the histone deacetylase HD2 family. In terms of assembly, multimer. Possibly forms a homotrimer with HDT1 and/or HDT2.

The protein localises to the nucleus. Its subcellular location is the nucleolus. Mediates the deacetylation of lysine residues on the N-terminal part of the core histones (H2A, H2B, H3 and H4). Histone deacetylation gives a tag for epigenetic repression and plays an important role in transcriptional regulation, cell cycle progression and developmental events. The protein is Histone deacetylase HDT3 (HDT3) of Zea mays (Maize).